A 238-amino-acid polypeptide reads, in one-letter code: Chloride intracellular channel exl-1 (238 aa).

This sequence belongs to the chloride channel CLIC family. As to expression, expressed in the intestine, neurons and muscles.

It is found in the cytoplasm. The protein localises to the membrane. It localises to the lysosome membrane. The protein resides in the golgi apparatus membrane. Probable chloride channel. The protein is Chloride intracellular channel exl-1 (exl-1) of Caenorhabditis elegans.